Reading from the N-terminus, the 498-residue chain is WD repeat-containing protein 55 homolog (498 aa).

Residues 1-133 (MHTHNNFKTP…TFDLDEDDET (133 aa)) are disordered. 3 stretches are compositionally biased toward acidic residues: residues 12 to 23 (DEDELDDLDEDM), 31 to 48 (IEQE…EYDL), and 83 to 95 (SDSD…DAGD). The segment covering 114–123 (PSGSNRQSEA) has biased composition (polar residues). WD repeat units lie at residues 155–194 (KLED…NKLL), 199–238 (VHSK…LKKL), 242–280 (AHDD…AIFE), 283–322 (ELED…MYVQ), 325–364 (PYEE…YHCD), and 409–448 (QHNM…DFGD).

This sequence belongs to the WD repeat WDR55 family.

The sequence is that of WD repeat-containing protein 55 homolog from Drosophila erecta (Fruit fly).